The primary structure comprises 352 residues: N-acetyl-gamma-glutamyl-phosphate reductase (352 aa).

Residue Cys155 is part of the active site.

It belongs to the NAGSA dehydrogenase family. Type 1 subfamily.

Its subcellular location is the cytoplasm. The catalysed reaction is N-acetyl-L-glutamate 5-semialdehyde + phosphate + NADP(+) = N-acetyl-L-glutamyl 5-phosphate + NADPH + H(+). It functions in the pathway amino-acid biosynthesis; L-arginine biosynthesis; N(2)-acetyl-L-ornithine from L-glutamate: step 3/4. Functionally, catalyzes the NADPH-dependent reduction of N-acetyl-5-glutamyl phosphate to yield N-acetyl-L-glutamate 5-semialdehyde. This Picosynechococcus sp. (strain ATCC 27264 / PCC 7002 / PR-6) (Agmenellum quadruplicatum) protein is N-acetyl-gamma-glutamyl-phosphate reductase.